The sequence spans 211 residues: Endo-1,4-beta-xylanase 3 (211 aa).

The first 27 residues, 1–27 (MKVTAAFAGLLVTAFAAPVPEPVLVSR), serve as a signal peptide directing secretion. In terms of domain architecture, GH11 spans 28–210 (SAGINYVQNY…GAGSASVTIS (183 aa)). Glu-106 acts as the Nucleophile in catalysis. Cys-119 and Cys-138 are oxidised to a cystine. Glu-197 (proton donor) is an active-site residue.

Belongs to the glycosyl hydrolase 11 (cellulase G) family.

The protein resides in the secreted. The enzyme catalyses Endohydrolysis of (1-&gt;4)-beta-D-xylosidic linkages in xylans.. It participates in glycan degradation; xylan degradation. This is Endo-1,4-beta-xylanase 3 (xynC) from Aspergillus kawachii (strain NBRC 4308) (White koji mold).